The sequence spans 137 residues: Small ribosomal subunit protein bS16m (137 aa).

A mitochondrion-targeting transit peptide spans 1–34; it reads MVHLTTLLCKAYRGGHLTIRLALGGCTNRPFYRI. Thr130 carries the phosphothreonine modification.

Belongs to the bacterial ribosomal protein bS16 family. As to quaternary structure, component of the mitochondrial small ribosomal subunit (mt-SSU). Mature mammalian 55S mitochondrial ribosomes consist of a small (28S) and a large (39S) subunit. The 28S small subunit contains a 12S ribosomal RNA (12S mt-rRNA) and 30 different proteins. The 39S large subunit contains a 16S rRNA (16S mt-rRNA), a copy of mitochondrial valine transfer RNA (mt-tRNA(Val)), which plays an integral structural role, and 52 different proteins. bS16m has a zinc binding site.

It is found in the mitochondrion. This Homo sapiens (Human) protein is Small ribosomal subunit protein bS16m (MRPS16).